The chain runs to 551 residues: Glucose-6-phosphate isomerase (551 aa).

Glu-349 functions as the Proton donor in the catalytic mechanism. Residues His-378 and Lys-480 contribute to the active site.

Belongs to the GPI family.

The protein localises to the cytoplasm. The enzyme catalyses alpha-D-glucose 6-phosphate = beta-D-fructose 6-phosphate. It functions in the pathway carbohydrate biosynthesis; gluconeogenesis. The protein operates within carbohydrate degradation; glycolysis; D-glyceraldehyde 3-phosphate and glycerone phosphate from D-glucose: step 2/4. Catalyzes the reversible isomerization of glucose-6-phosphate to fructose-6-phosphate. This is Glucose-6-phosphate isomerase from Parasynechococcus marenigrum (strain WH8102).